A 300-amino-acid polypeptide reads, in one-letter code: Alpha-tubulin N-acetyltransferase 1 (300 aa).

The N-acetyltransferase domain maps to 1–190 (MEFPFDVDAL…NNFVIFEGFF (190 aa)). The residue at position 56 (K56) is an N6-acetyllysine; by autocatalysis. An acetyl-CoA-binding site is contributed by 124–137 (FYIHESLQRHGHGR). K146 bears the N6-acetyllysine; by autocatalysis mark. Residue 160–169 (SQKLLKFLNK) participates in acetyl-CoA binding. An N6-acetyllysine; by autocatalysis mark is found at K210 and K221. 2 disordered regions span residues 229–263 (PLNR…RPFV) and 280–300 (TARL…RRTR). Residues S249 and S253 each carry the phosphoserine modification. R282 is modified (asymmetric dimethylarginine). At S292 the chain carries Phosphoserine. R300 carries the omega-N-methylarginine modification.

The protein belongs to the acetyltransferase ATAT1 family. Component of the BBSome complex. Interacts with AP2 alpha-adaptins, including AP2A2, but not with AP1 gamma-adaptin (AP1G1/AP1G2); this interaction is required for efficient alpha-tubulin acetylation, hence clathrin-coated pits are sites of microtubule acetylation. Post-translationally, autoacetylation strongly increases tubulin acetylation.

It is found in the cytoplasm. The protein localises to the membrane. Its subcellular location is the clathrin-coated pit. The protein resides in the cell junction. It localises to the focal adhesion. It is found in the cell projection. The protein localises to the axon. Its subcellular location is the cytoskeleton. The protein resides in the spindle. The catalysed reaction is L-lysyl-[alpha-tubulin] + acetyl-CoA = N(6)-acetyl-L-lysyl-[alpha-tubulin] + CoA + H(+). In terms of biological role, specifically acetylates 'Lys-40' in alpha-tubulin on the lumenal side of microtubules. Promotes microtubule destabilization and accelerates microtubule dynamics; this activity may be independent of acetylation activity. Acetylates alpha-tubulin with a slow enzymatic rate, due to a catalytic site that is not optimized for acetyl transfer. Enters the microtubule through each end and diffuses quickly throughout the lumen of microtubules. Acetylates only long/old microtubules because of its slow acetylation rate since it does not have time to act on dynamically unstable microtubules before the enzyme is released. Required for normal sperm flagellar function. Promotes directional cell locomotion and chemotaxis, through AP2A2-dependent acetylation of alpha-tubulin at clathrin-coated pits that are concentrated at the leading edge of migrating cells. May facilitate primary cilium assembly. This is Alpha-tubulin N-acetyltransferase 1 from Sus scrofa (Pig).